A 782-amino-acid polypeptide reads, in one-letter code: Pyridoxal-dependent decarboxylase domain-containing protein 1 (782 aa).

Over residues Ile26 to Ile48 the composition is skewed to basic and acidic residues. 4 disordered regions span residues Ile26–Gly56, Gln673–Lys695, Arg702–Ser721, and Pro726–Arg782. Composition is skewed to polar residues over residues Asn703–Ser714 and Ala747–Arg782.

This sequence belongs to the group II decarboxylase family. Pyridoxal 5'-phosphate is required as a cofactor.

This Xenopus laevis (African clawed frog) protein is Pyridoxal-dependent decarboxylase domain-containing protein 1 (pdxdc1).